The primary structure comprises 100 residues: Large ribosomal subunit protein uL23 (100 aa).

Belongs to the universal ribosomal protein uL23 family. In terms of assembly, part of the 50S ribosomal subunit. Contacts protein L29, and trigger factor when it is bound to the ribosome.

In terms of biological role, one of the early assembly proteins it binds 23S rRNA. One of the proteins that surrounds the polypeptide exit tunnel on the outside of the ribosome. Forms the main docking site for trigger factor binding to the ribosome. The protein is Large ribosomal subunit protein uL23 of Novosphingobium aromaticivorans (strain ATCC 700278 / DSM 12444 / CCUG 56034 / CIP 105152 / NBRC 16084 / F199).